A 101-amino-acid chain; its full sequence is Iron-sulfur cluster assembly protein CyaY (101 aa).

It belongs to the frataxin family.

In terms of biological role, involved in iron-sulfur (Fe-S) cluster assembly. May act as a regulator of Fe-S biogenesis. The sequence is that of Iron-sulfur cluster assembly protein CyaY from Actinobacillus pleuropneumoniae serotype 5b (strain L20).